A 426-amino-acid chain; its full sequence is MISCSVRRRPRWEPQVGAAFLAFALLPVLASGRGMQAAVATAAGSSGSGSDGKHPGKEQFLQFLIPSGGRYEYLGVSFTALADDASFFEANPAGSAGLSRGEVALFHHSQIHDSHTETVSFARRTQNTGYGASVRAFSSESDLKSFFGGNSGGNKNGGHQGKQGKGFVAIANASHTFCGQYRFKGVSFGCNFKMGFRKGKTDSHVTVAGDLGLRAAFSVAKNFGSNEPNMHVGLVLKNAGISVKTNSCQVEHLNPAIAVGFAYRPVYAFLFSLGLQQTLTKRESPVCSVGFMFFCTQHVTLLASAACEGGAYALSGGAEIRIGSFHLDMGYRYDQIFQAAHPHHVSVGLKWLIPNGGTQADQALLVKESYLVGLRFYDQRRYQEAITAWQLTLRQDPGFEPAAEGIERARRFLKLHEKLSLFDILN.

The N-terminal stretch at 1–37 is a signal peptide; sequence MISCSVRRRPRWEPQVGAAFLAFALLPVLASGRGMQA.

This sequence belongs to the UPF0164 family.

The chain is UPF0164 protein TP_0548 from Treponema pallidum (strain Nichols).